A 97-amino-acid chain; its full sequence is C-C motif chemokine 8 (97 aa).

An N-terminal signal peptide occupies residues 1–23 (MKIYAVLLCLLLIAVPVSPEKLT). 2 disulfide bridges follow: Cys32-Cys57 and Cys33-Cys73.

It belongs to the intercrine beta (chemokine CC) family. Monomer or homodimer; in equilibrium.

The protein localises to the secreted. Functionally, chemotactic factor that attracts monocytes. This protein can bind heparin. This is C-C motif chemokine 8 (Ccl8) from Mus musculus (Mouse).